The sequence spans 129 residues: Small ribosomal subunit protein uS11 (129 aa).

The protein belongs to the universal ribosomal protein uS11 family. Part of the 30S ribosomal subunit. Interacts with proteins S7 and S18. Binds to IF-3.

Located on the platform of the 30S subunit, it bridges several disparate RNA helices of the 16S rRNA. Forms part of the Shine-Dalgarno cleft in the 70S ribosome. This is Small ribosomal subunit protein uS11 from Brucella abortus (strain S19).